The chain runs to 264 residues: Hydroxyethylthiazole kinase (264 aa).

Met52 is a binding site for substrate. Arg127 and Thr173 together coordinate ATP. A substrate-binding site is contributed by Gly200.

It belongs to the Thz kinase family. Mg(2+) serves as cofactor.

It carries out the reaction 5-(2-hydroxyethyl)-4-methylthiazole + ATP = 4-methyl-5-(2-phosphooxyethyl)-thiazole + ADP + H(+). It functions in the pathway cofactor biosynthesis; thiamine diphosphate biosynthesis; 4-methyl-5-(2-phosphoethyl)-thiazole from 5-(2-hydroxyethyl)-4-methylthiazole: step 1/1. Catalyzes the phosphorylation of the hydroxyl group of 4-methyl-5-beta-hydroxyethylthiazole (THZ). This chain is Hydroxyethylthiazole kinase, found in Pectobacterium carotovorum subsp. carotovorum (strain PC1).